We begin with the raw amino-acid sequence, 379 residues long: Putative acetyl-CoA C-acetyltransferase VraB (379 aa).

Cys-86 acts as the Acyl-thioester intermediate in catalysis. His-338 acts as the Proton acceptor in catalysis.

The protein belongs to the thiolase-like superfamily. Thiolase family.

In Staphylococcus aureus (strain MSSA476), this protein is Putative acetyl-CoA C-acetyltransferase VraB (vraB).